A 635-amino-acid polypeptide reads, in one-letter code: Thrombopoietin receptor (635 aa).

Positions 1–25 (MPSWALFMVTSCLLLAPQNLAQVSS) are cleaved as a signal peptide. Topologically, residues 26 to 491 (QDVSLLASDS…RVETATETAW (466 aa)) are extracellular. 2 disulfide bridges follow: Cys-40/Cys-50 and Cys-77/Cys-93. N-linked (GlcNAc...) asparagine glycans are attached at residues Asn-117 and Asn-178. The Fibronectin type-III 1 domain occupies 172–281 (GPRDPKNSTG…WSLPVTVDLP (110 aa)). 4 disulfide bridges follow: Cys-193–Cys-323, Cys-194–Cys-241, Cys-291–Cys-301, and Cys-334–Cys-352. Positions 205 to 232 (ALDQSPCAQPTMPWQDGPKQTSPSREAS) are disordered. N-linked (GlcNAc...) asparagine glycosylation occurs at Asn-298. The N-linked (GlcNAc...) asparagine glycan is linked to Asn-358. The region spanning 392-486 (PTPNLHWREI…WSDPTRVETA (95 aa)) is the Fibronectin type-III 2 domain. The short motif at 474-478 (WSSWS) is the WSXWS motif element. The chain crosses the membrane as a helical span at residues 492-513 (ISLVTALHLVLGLSAVLGLLLL). The Cytoplasmic portion of the chain corresponds to 514 to 635 (RWQFPAHYRR…YLPLSYWQQP (122 aa)). The Box 1 motif motif lies at 528–536 (LWPSLPDLH). Residues Lys-553 and Lys-573 each participate in a glycyl lysine isopeptide (Lys-Gly) (interchain with G-Cter in ubiquitin) cross-link. Tyr-591, Tyr-626, and Tyr-631 each carry phosphotyrosine.

It belongs to the type I cytokine receptor family. Type 1 subfamily. Homodimer. Interacts with ATXN2L. Interacts with JAK2 and TYK2; these interactions increase MPL localization to the cell membrane. Interacts with THPO. Interacts with SHIP/INPP5D. Interacts with BTK. Interacts with SYK; this interaction negatively regulates THPO-mediated ERK1/2 signaling. Post-translationally, phosphorylated at Tyr-591 in response to THPO stimulation. In terms of processing, ubiquitination at Lys-553 and Lys-573 targets MPL for degradation by both the lysosomal and proteasomal pathways. The E3 ubiquitin-protein ligase CBL significantly contributes to this ubiquitination. In terms of tissue distribution, expressed at a low level in a large number of cells of hematopoietic origin. Isoform 1 and isoform 2 are always found to be coexpressed.

The protein resides in the cell membrane. It localises to the golgi apparatus. It is found in the cell surface. Functionally, receptor for thrombopoietin that regulates hematopoietic stem cell renewal, megakaryocyte differentiation, and platelet formation. Upon activation by THPO, induces rapid tyrosine phosphorylation and activation of JAK2, providing docking sites for many signaling proteins such as STAT5, SHIP/INPP5D, GRB2, SOS1 and PI3K. In turn, These signaling cascades lead to the proliferation, survival, and differentiation of megakaryocytes, ultimately leading to increased platelet production. The sequence is that of Thrombopoietin receptor (MPL) from Homo sapiens (Human).